Reading from the N-terminus, the 271-residue chain is Probable short-chain type dehydrogenase/reductase VdlC (271 aa).

Residue methionine 1–lysine 25 coordinates NAD(+). Serine 129 provides a ligand contact to substrate. The active-site Proton acceptor is tyrosine 142.

This sequence belongs to the short-chain dehydrogenases/reductases (SDR) family.

This Helicobacter pylori (strain J99 / ATCC 700824) (Campylobacter pylori J99) protein is Probable short-chain type dehydrogenase/reductase VdlC (vdlC).